A 291-amino-acid chain; its full sequence is 33 kDa chaperonin (291 aa).

Disulfide bonds link Cys229/Cys231 and Cys262/Cys265.

This sequence belongs to the HSP33 family. Post-translationally, under oxidizing conditions two disulfide bonds are formed involving the reactive cysteines. Under reducing conditions zinc is bound to the reactive cysteines and the protein is inactive.

The protein resides in the cytoplasm. Functionally, redox regulated molecular chaperone. Protects both thermally unfolding and oxidatively damaged proteins from irreversible aggregation. Plays an important role in the bacterial defense system toward oxidative stress. In Vibrio vulnificus (strain YJ016), this protein is 33 kDa chaperonin.